Here is a 200-residue protein sequence, read N- to C-terminus: Ras-related protein RABF2a (200 aa).

Position 17 to 25 (17 to 25 (GDVGAGKSS)) interacts with GTP. An Effector region motif is present at residues 39–47 (QESTIGAAF). GTP is bound by residues 65–69 (DTAGQ), 123–126 (NKAD), and 153–154 (SA). S-geranylgeranyl cysteine attachment occurs at residues Cys198 and Cys199.

It belongs to the small GTPase superfamily. Rab family. In terms of assembly, interacts with VPS9A. Interacts with EREX (via PX domain). Binds to VPS3. As to expression, high in stem, root, and inflorescence.

It localises to the endosome membrane. The protein localises to the prevacuolar compartment membrane. In terms of biological role, involved in the trafficking of soluble cargo proteins from the prevacuolar compartment to the central vacuole. Involved in vacuolar transport of storage proteins with EREX as effector. Regulates membrane trafficking to protein storage vacuoles (PSVs). This is Ras-related protein RABF2a (RABF2A) from Arabidopsis thaliana (Mouse-ear cress).